A 486-amino-acid chain; its full sequence is Cardiolipin synthase A (486 aa).

A run of 2 helical transmembrane segments spans residues 3–23 and 38–58; these read TFYT…IAGV and MAWL…YLSV. PLD phosphodiesterase domains follow at residues 219–246 and 399–426; these read MDLR…VDPR and EGGL…DMRS. Active-site residues include H224, K226, D231, H404, K406, and D411.

It belongs to the phospholipase D family. Cardiolipin synthase subfamily. ClsA sub-subfamily.

The protein localises to the cell inner membrane. It catalyses the reaction 2 a 1,2-diacyl-sn-glycero-3-phospho-(1'-sn-glycerol) = a cardiolipin + glycerol. In terms of biological role, catalyzes the reversible phosphatidyl group transfer from one phosphatidylglycerol molecule to another to form cardiolipin (CL) (diphosphatidylglycerol) and glycerol. The protein is Cardiolipin synthase A of Cronobacter sakazakii (strain ATCC BAA-894) (Enterobacter sakazakii).